A 280-amino-acid chain; its full sequence is UPF0276 protein CC_2906 (280 aa).

The protein belongs to the UPF0276 family.

The polypeptide is UPF0276 protein CC_2906 (Caulobacter vibrioides (strain ATCC 19089 / CIP 103742 / CB 15) (Caulobacter crescentus)).